Here is a 237-residue protein sequence, read N- to C-terminus: UPF0173 metal-dependent hydrolase BOV_A0561 (237 aa).

Belongs to the UPF0173 family.

This Brucella ovis (strain ATCC 25840 / 63/290 / NCTC 10512) protein is UPF0173 metal-dependent hydrolase BOV_A0561.